The chain runs to 85 residues: Small ribosomal subunit protein bS16 (85 aa).

It belongs to the bacterial ribosomal protein bS16 family.

This chain is Small ribosomal subunit protein bS16, found in Xanthomonas oryzae pv. oryzae (strain PXO99A).